The primary structure comprises 897 residues: Schlafen family member 13 (897 aa).

The n'-domain region stretch occupies residues 2 to 355 (EANHCSLGVY…WVEKMMDADP (354 aa)). Residues Glu-208 and Glu-213 contribute to the active site. Residues His-284, Cys-286, and Cys-321 each contribute to the Zn(2+) site. Residue 599-606 (GLPGSGKT) coordinates ATP.

The protein belongs to the Schlafen family. Subgroup III subfamily. The cofactor is Mg(2+).

The protein localises to the cytoplasm. Functionally, endoribonuclease that cleaves tRNAs and rRNAs. Cleaves tRNAs 11 nucleotides from the 3'-terminus at the acceptor stem. Does not act on tRNA(Sec). Able to restrict HIV-1 virus replication; ability to inhibit HIV-1 replication is dependent on endoribonuclease activity. In Homo sapiens (Human), this protein is Schlafen family member 13.